The sequence spans 216 residues: Small ribosomal subunit protein uS3 (216 aa).

Positions 38–108 (LREFVKKKLH…DLAIDIQEVK (71 aa)) constitute a KH type-2 domain.

This sequence belongs to the universal ribosomal protein uS3 family. As to quaternary structure, part of the 30S ribosomal subunit. Forms a tight complex with proteins S10 and S14.

Functionally, binds the lower part of the 30S subunit head. Binds mRNA in the 70S ribosome, positioning it for translation. This Desulfosudis oleivorans (strain DSM 6200 / JCM 39069 / Hxd3) (Desulfococcus oleovorans) protein is Small ribosomal subunit protein uS3.